A 368-amino-acid chain; its full sequence is Ribosomal RNA large subunit methyltransferase M (368 aa).

Residues serine 192, 225 to 228, aspartate 244, aspartate 264, and aspartate 281 contribute to the S-adenosyl-L-methionine site; that span reads APGG. The active-site Proton acceptor is lysine 310.

The protein belongs to the class I-like SAM-binding methyltransferase superfamily. RNA methyltransferase RlmE family. RlmM subfamily. Monomer.

The protein resides in the cytoplasm. The enzyme catalyses cytidine(2498) in 23S rRNA + S-adenosyl-L-methionine = 2'-O-methylcytidine(2498) in 23S rRNA + S-adenosyl-L-homocysteine + H(+). Its function is as follows. Catalyzes the 2'-O-methylation at nucleotide C2498 in 23S rRNA. This Colwellia psychrerythraea (strain 34H / ATCC BAA-681) (Vibrio psychroerythus) protein is Ribosomal RNA large subunit methyltransferase M.